Here is a 269-residue protein sequence, read N- to C-terminus: Protein NETWORKED 3A (269 aa).

The 82-residue stretch at 6–87 (SKWWWIGNHN…ERYDLLRPSS (82 aa)) folds into the NAB domain. A disordered region spans residues 87 to 113 (SVHKHGSDSESHEKSSTCDESSWSEAC). The span at 91-103 (HGSDSESHEKSST) shows a compositional bias: basic and acidic residues. Residues 155–214 (NGNSEMMKIEIERLREENKVYSEMVREKDEEKREAIRQMSVAIQMLKEENSELKKRVTNT) adopt a coiled-coil conformation.

The protein belongs to the NET family.

Its subcellular location is the cytoplasm. It localises to the cytoskeleton. The protein localises to the nucleus membrane. Its function is as follows. Plant-specific actin binding protein. May be part of a membrane-cytoskeletal adapter complex. The chain is Protein NETWORKED 3A from Arabidopsis thaliana (Mouse-ear cress).